The chain runs to 157 residues: S-ribosylhomocysteine lyase (157 aa).

Histidine 54, histidine 58, and cysteine 126 together coordinate Fe cation.

The protein belongs to the LuxS family. In terms of assembly, homodimer. It depends on Fe cation as a cofactor.

The catalysed reaction is S-(5-deoxy-D-ribos-5-yl)-L-homocysteine = (S)-4,5-dihydroxypentane-2,3-dione + L-homocysteine. In terms of biological role, involved in the synthesis of autoinducer 2 (AI-2) which is secreted by bacteria and is used to communicate both the cell density and the metabolic potential of the environment. The regulation of gene expression in response to changes in cell density is called quorum sensing. Catalyzes the transformation of S-ribosylhomocysteine (RHC) to homocysteine (HC) and 4,5-dihydroxy-2,3-pentadione (DPD). The polypeptide is S-ribosylhomocysteine lyase (Bacillus velezensis (strain DSM 23117 / BGSC 10A6 / LMG 26770 / FZB42) (Bacillus amyloliquefaciens subsp. plantarum)).